The following is a 263-amino-acid chain: Small ribosomal subunit protein eS4 (263 aa).

The S4 RNA-binding domain occupies 42-104 (LPLVIFLRNR…TNELFRLIYD (63 aa)).

This sequence belongs to the eukaryotic ribosomal protein eS4 family.

The protein is Small ribosomal subunit protein eS4 (RpS4) of Spodoptera frugiperda (Fall armyworm).